Consider the following 301-residue polypeptide: J domain-containing protein 1 (301 aa).

One can recognise a J domain in the interval 58 to 150 (TPYDIFGIPK…KKKIVYDTTR (93 aa)). The chain crosses the membrane as a helical span at residues 208 to 228 (WTVIGIICGLAICIEGTALLA).

The protein belongs to the DnaJ family.

It localises to the mitochondrion membrane. Its function is as follows. Probable chaperone. The chain is J domain-containing protein 1 (JID1) from Saccharomyces cerevisiae (strain ATCC 204508 / S288c) (Baker's yeast).